Consider the following 124-residue polypeptide: Small ribosomal subunit protein bS16 (124 aa).

The span at 81 to 90 (LKKRPARNNP) shows a compositional bias: basic residues. Residues 81–124 (LKKRPARNNPHKGEPGKKAQERIAAAKQAAEDAAAAAEADSASE) are disordered. The segment covering 91–101 (HKGEPGKKAQE) has biased composition (basic and acidic residues). The span at 102–124 (RIAAAKQAAEDAAAAAEADSASE) shows a compositional bias: low complexity.

It belongs to the bacterial ribosomal protein bS16 family.

The chain is Small ribosomal subunit protein bS16 from Bartonella tribocorum (strain CIP 105476 / IBS 506).